The primary structure comprises 608 residues: UvrABC system protein C (608 aa).

In terms of domain architecture, GIY-YIG spans 13 to 91 (HDPGVYRMFD…IKTFQPRYNV (79 aa)). Residues 201-236 (QQVLDHLIGKMERASRALNFEEAARYRDQIQAVRSV) form the UVR domain.

Belongs to the UvrC family. In terms of assembly, interacts with UvrB in an incision complex.

It localises to the cytoplasm. Functionally, the UvrABC repair system catalyzes the recognition and processing of DNA lesions. UvrC both incises the 5' and 3' sides of the lesion. The N-terminal half is responsible for the 3' incision and the C-terminal half is responsible for the 5' incision. This Mannheimia succiniciproducens (strain KCTC 0769BP / MBEL55E) protein is UvrABC system protein C.